A 175-amino-acid polypeptide reads, in one-letter code: RNA pyrophosphohydrolase (175 aa).

Residues 6–150 (GFRPNVGIVI…KREVYRRVMK (145 aa)) form the Nudix hydrolase domain. The short motif at 38 to 59 (GGVDDGETPEQAMYRELYEEIG) is the Nudix box element.

Belongs to the Nudix hydrolase family. RppH subfamily. A divalent metal cation is required as a cofactor.

Accelerates the degradation of transcripts by removing pyrophosphate from the 5'-end of triphosphorylated RNA, leading to a more labile monophosphorylated state that can stimulate subsequent ribonuclease cleavage. The chain is RNA pyrophosphohydrolase from Aeromonas hydrophila subsp. hydrophila (strain ATCC 7966 / DSM 30187 / BCRC 13018 / CCUG 14551 / JCM 1027 / KCTC 2358 / NCIMB 9240 / NCTC 8049).